Consider the following 384-residue polypeptide: PqqA peptide cyclase (384 aa).

Residues 15–231 (PGPPLWLLAE…NQWRDKLAAE (217 aa)) form the Radical SAM core domain. [4Fe-4S] cluster contacts are provided by Cys-29, Cys-33, and Cys-36.

Belongs to the radical SAM superfamily. PqqE family. In terms of assembly, interacts with PqqD. The interaction is necessary for activity of PqqE. [4Fe-4S] cluster is required as a cofactor.

The enzyme catalyses [PQQ precursor protein] + S-adenosyl-L-methionine = E-Y cross-linked-[PQQ precursor protein] + 5'-deoxyadenosine + L-methionine + H(+). It participates in cofactor biosynthesis; pyrroloquinoline quinone biosynthesis. Catalyzes the cross-linking of a glutamate residue and a tyrosine residue in the PqqA protein as part of the biosynthesis of pyrroloquinoline quinone (PQQ). This is PqqA peptide cyclase from Ectopseudomonas mendocina (strain ymp) (Pseudomonas mendocina).